The chain runs to 180 residues: Large ribosomal subunit protein uL5 (180 aa).

It belongs to the universal ribosomal protein uL5 family. As to quaternary structure, part of the 50S ribosomal subunit; part of the 5S rRNA/L5/L18/L25 subcomplex. Contacts the 5S rRNA and the P site tRNA. Forms a bridge to the 30S subunit in the 70S ribosome.

Its function is as follows. This is one of the proteins that bind and probably mediate the attachment of the 5S RNA into the large ribosomal subunit, where it forms part of the central protuberance. In the 70S ribosome it contacts protein S13 of the 30S subunit (bridge B1b), connecting the 2 subunits; this bridge is implicated in subunit movement. Contacts the P site tRNA; the 5S rRNA and some of its associated proteins might help stabilize positioning of ribosome-bound tRNAs. The sequence is that of Large ribosomal subunit protein uL5 from Acholeplasma laidlawii (strain PG-8A).